The chain runs to 160 residues: ATP synthase subunit b (160 aa).

A helical membrane pass occupies residues 15-35; the sequence is LVIVIGLLFWFLRGFLGGILE.

The protein belongs to the ATPase B chain family. As to quaternary structure, F-type ATPases have 2 components, F(1) - the catalytic core - and F(0) - the membrane proton channel. F(1) has five subunits: alpha(3), beta(3), gamma(1), delta(1), epsilon(1). F(0) has four main subunits: a(1), b(1), b'(1) and c(10-14). The alpha and beta chains form an alternating ring which encloses part of the gamma chain. F(1) is attached to F(0) by a central stalk formed by the gamma and epsilon chains, while a peripheral stalk is formed by the delta, b and b' chains.

Its subcellular location is the cellular thylakoid membrane. Its function is as follows. F(1)F(0) ATP synthase produces ATP from ADP in the presence of a proton or sodium gradient. F-type ATPases consist of two structural domains, F(1) containing the extramembraneous catalytic core and F(0) containing the membrane proton channel, linked together by a central stalk and a peripheral stalk. During catalysis, ATP synthesis in the catalytic domain of F(1) is coupled via a rotary mechanism of the central stalk subunits to proton translocation. Functionally, component of the F(0) channel, it forms part of the peripheral stalk, linking F(1) to F(0). The protein is ATP synthase subunit b of Synechococcus sp. (strain CC9605).